We begin with the raw amino-acid sequence, 206 residues long: MGNKWSKCSTVGRPAIRERMRRAPAAEGVGPASQDSDKYGALTSSSTPANNADCAWLEAQQEEEEVGFPVRPQVPLRPMTYKAVVDLSFFLEEKGGLEGLIYSKKRQDILDLWVYNTQGYFPDWQNYTPGPGVRFPLTFGWCFKLVPVDPREVEEANTGENNSLLHPMSLHGMEDSHREVLQWKFDSLLARRHMARELHPEYYKDC.

The interval 1 to 46 (MGNKWSKCSTVGRPAIRERMRRAPAAEGVGPASQDSDKYGALTSSS) is disordered. A lipid anchor (N-myristoyl glycine; by host) is attached at Gly2. Ser6 is subject to Phosphoserine; by host. The segment at 61–65 (QEEEE) is acidic; interacts with host PACS1 and PACS2; stabilizes the interaction of NEF/MHC-I with host AP1M1; necessary for MHC-I internalization. Positions 69–78 (PVRPQVPLRP) are SH3-binding; interaction with Src family tyrosine kinases. The PxxP; stabilizes the interaction of NEF/MHC-I with host AP1M1; necessary for MHC-I internalization motif lies at 72–75 (PQVP). A mediates dimerization, Nef-PTE1 interaction region spans residues 108-124 (DILDLWVYNTQGYFPDW). Residues 148–180 (VDPREVEEANTGENNSLLHPMSLHGMEDSHREV) are binding to ATP6V1H. Residues 164–165 (LL) carry the Dileucine internalization motif; necessary for CD4 internalization motif. The Diacidic; necessary for CD4 internalization signature appears at 174–175 (ED).

It belongs to the lentivirus primate group Nef protein family. Monomer; cytosolic form. Homodimer; membrane bound form. Interacts with Nef associated p21-activated kinase (PAK2); this interaction activates PAK2. Associates with the Nef-MHC-I-AP1 complex; this complex is required for MHC-I internalization. Interacts (via C-terminus) with host PI3-kinase. Interacts with host PACS1; this interaction seems to be weak. Interacts with host PACS2. Interacts with host LCK and MAPK3; these interactions inhibit the kinase activity of the latter. Interacts with host ATP6V1H; this interaction may play a role in CD4 endocytosis. Associates with the CD4-Nef-AP2 complex; this complex is required for CD4 internalization. Interacts with host AP2 subunit alpha and AP2 subunit sigma2. Interacts with TCR-zeta chain; this interaction up-regulates the Fas ligand (FasL) surface expression. Interacts with host HCK, LYN, and SRC; these interactions activate the Src family kinases. Interacts with MAP3K5; this interaction inhibits the Fas and TNFR-mediated death signals. Interacts with beta-COP and PTE1. Interacts with human RACK1; this increases Nef phosphorylation by PKC. Interacts with TP53; this interaction decreases the half-life of TP53, protecting the infected cell against p53-mediated apoptosis. In terms of processing, the virion-associated Nef proteins are cleaved by the viral protease to release the soluble C-terminal core protein. Nef is probably cleaved concomitantly with viral structural proteins on maturation of virus particles. Post-translationally, myristoylated. Phosphorylated on serine residues, probably by host PKCdelta and theta.

Its subcellular location is the host cell membrane. The protein localises to the virion. It is found in the secreted. It localises to the host Golgi apparatus membrane. In terms of biological role, factor of infectivity and pathogenicity, required for optimal virus replication. Alters numerous pathways of T-lymphocyte function and down-regulates immunity surface molecules in order to evade host defense and increase viral infectivity. Alters the functionality of other immunity cells, like dendritic cells, monocytes/macrophages and NK cells. Its function is as follows. In infected CD4(+) T-lymphocytes, down-regulates the surface MHC-I, mature MHC-II, CD4, CD28, CCR5 and CXCR4 molecules. Mediates internalization and degradation of host CD4 through the interaction of with the cytoplasmic tail of CD4, the recruitment of AP-2 (clathrin adapter protein complex 2), internalization through clathrin coated pits, and subsequent transport to endosomes and lysosomes for degradation. Diverts host MHC-I molecules to the trans-Golgi network-associated endosomal compartments by an endocytic pathway to finally target them for degradation. MHC-I down-regulation may involve AP-1 (clathrin adapter protein complex 1) or possibly Src family kinase-ZAP70/Syk-PI3K cascade recruited by PACS2. In consequence infected cells are masked for immune recognition by cytotoxic T-lymphocytes. Decreasing the number of immune receptors also prevents reinfection by more HIV particles (superinfection). Down-regulates host SERINC3 and SERINC5 thereby excluding these proteins from the viral particles. Virion infectivity is drastically higher when SERINC3 or SERINC5 are excluded from the viral envelope, because these host antiviral proteins impair the membrane fusion event necessary for subsequent virion penetration. Functionally, bypasses host T-cell signaling by inducing a transcriptional program nearly identical to that of anti-CD3 cell activation. Interaction with TCR-zeta chain up-regulates the Fas ligand (FasL). Increasing surface FasL molecules and decreasing surface MHC-I molecules on infected CD4(+) cells send attacking cytotoxic CD8+ T-lymphocytes into apoptosis. Plays a role in optimizing the host cell environment for viral replication without causing cell death by apoptosis. Protects the infected cells from apoptosis in order to keep them alive until the next virus generation is ready to strike. Inhibits the Fas and TNFR-mediated death signals by blocking MAP3K5/ASK1. Decreases the half-life of TP53, protecting the infected cell against p53-mediated apoptosis. Inhibits the apoptotic signals regulated by the Bcl-2 family proteins through the formation of a Nef/PI3-kinase/PAK2 complex that leads to activation of PAK2 and induces phosphorylation of host BAD. In terms of biological role, extracellular Nef protein targets CD4(+) T-lymphocytes for apoptosis by interacting with CXCR4 surface receptors. The chain is Protein Nef from Human immunodeficiency virus type 1 group M subtype C (isolate 92BR025) (HIV-1).